The primary structure comprises 173 residues: Protein SUGARY ENHANCER 1 (173 aa).

The segment at 1 to 31 is disordered; the sequence is MIRPAPWVGAGHRGRGGEAGACTESLGSESG.

This sequence belongs to the fantastic four family.

Functionally, involved in starch metabolism in endosperm. Acts as a modifier of SUGARY1 (SU1), an isoamylase starch-debranching enzyme involved in amylopectin biosynthesis in endosperm. In Zea mays (Maize), this protein is Protein SUGARY ENHANCER 1.